A 515-amino-acid polypeptide reads, in one-letter code: Maturase K (515 aa).

Belongs to the intron maturase 2 family. MatK subfamily.

It localises to the plastid. It is found in the chloroplast. Functionally, usually encoded in the trnK tRNA gene intron. Probably assists in splicing its own and other chloroplast group II introns. The chain is Maturase K from Pinus coulteri (Coulter pine).